We begin with the raw amino-acid sequence, 174 residues long: Large ribosomal subunit protein uL10 (174 aa).

This sequence belongs to the universal ribosomal protein uL10 family. Part of the ribosomal stalk of the 50S ribosomal subunit. The N-terminus interacts with L11 and the large rRNA to form the base of the stalk. The C-terminus forms an elongated spine to which L12 dimers bind in a sequential fashion forming a multimeric L10(L12)X complex.

Its function is as follows. Forms part of the ribosomal stalk, playing a central role in the interaction of the ribosome with GTP-bound translation factors. The chain is Large ribosomal subunit protein uL10 from Geotalea uraniireducens (strain Rf4) (Geobacter uraniireducens).